A 957-amino-acid polypeptide reads, in one-letter code: MSQLLSLSQLREPNAFLNRHLGPDAEEQQAMLASLGLGSRAELIEQTVPPGIRFNRALDLPPALDEAAALARLKGYAGQNQVWTSLIGMGYHATLTPTVILRNVLENPGWYTAYTPYQPEIAQGRLEALLNFQQMTIDLTGLDLANASLLDEATAAAEAMALAKRVSKSSSNLFFVDEHCHPQTVSVVRTRAEGFGFELVVGGVDELSGHQVFGALLQYPDTHGEIRDLRPLIDQLHAQQALACVAADLLSLLLLTPPGELGADVVLGSSQRFGVPMGYGGPHAAFFACRDDYKRAMPGRIIGVSKDARGQVALRMALQTREQHIRREKANSNICTAQVLLANIAGFYAVYHGPAGLKRIAQRVHRLTCILAVGLERHGIARVNRHFFDTLTLEVGGSQTAIIESARAQQINLRILGRGRLGLSLDETCDESTVTRLFDVFLGADHGLDVSNLDAEALESGIPDPLLRRTRYLTHPVFSAHHSETEMLRYLKQLENKDLALNQSMIPLGSCTMKLNASSEMIPITWPEFANLHPFAPREQAAGYGLLIAELERWLCAITGFDAICMQPNSGAQGEYAGLLAIRRYHESRRQGGRHVCLIPASAHGTNPASAQMAGMQVVIVECDEAGNVDLEDLKAKAQAAGERLSCLMATYPSTHGVYEEGISQICEVIHSHGGQVYMDGANLNAQVGLARPADIGADVSHMNLHKTFCIPHGGGGPGMGPIGVRAHLAPFVANHPVVPIDGPLPENGAVSAAPWGSASILPISWMYIALMGPQLADASEVAILAANYLAEQLSGAFPVLYSGRNGRVAHECILDLRPLKAQTGISEEDVAKRLMDYGFHAPTMSFPVPGTLMVEPTESESKAELDRFIEAMLSIRAEIAQVQEGNWPAEDNPLKGAPHTLADITGVWERSYSIEQAVLPTAHTRAHKYWPAVNRVDNVYGDRNLFCACVPLADYR.

K707 carries the post-translational modification N6-(pyridoxal phosphate)lysine.

This sequence belongs to the GcvP family. As to quaternary structure, the glycine cleavage system is composed of four proteins: P, T, L and H. Pyridoxal 5'-phosphate serves as cofactor.

It catalyses the reaction N(6)-[(R)-lipoyl]-L-lysyl-[glycine-cleavage complex H protein] + glycine + H(+) = N(6)-[(R)-S(8)-aminomethyldihydrolipoyl]-L-lysyl-[glycine-cleavage complex H protein] + CO2. Its function is as follows. The glycine cleavage system catalyzes the degradation of glycine. The P protein binds the alpha-amino group of glycine through its pyridoxal phosphate cofactor; CO(2) is released and the remaining methylamine moiety is then transferred to the lipoamide cofactor of the H protein. The protein is Glycine dehydrogenase (decarboxylating) 2 of Pseudomonas fluorescens (strain ATCC BAA-477 / NRRL B-23932 / Pf-5).